The following is a 376-amino-acid chain: Alcohol dehydrogenase 1 (376 aa).

The residue at position 2 (S2) is an N-acetylserine. Positions 47, 68, 98, 101, 104, 112, and 176 each coordinate Zn(2+). Residues 201 to 206 (GLGGVG), D225, and K230 each bind NAD(+). Position 235 is an N6-succinyllysine (K235). 294 to 296 (VGV) provides a ligand contact to NAD(+). An N6-succinyllysine modification is found at K341. R371 contacts NAD(+).

This sequence belongs to the zinc-containing alcohol dehydrogenase family. Class-I subfamily. In terms of assembly, dimer of identical or non-identical chains of three types (A, B, C), which are coded by 3 separate genes at different loci. Zn(2+) is required as a cofactor.

The protein localises to the cytoplasm. The enzyme catalyses a primary alcohol + NAD(+) = an aldehyde + NADH + H(+). It catalyses the reaction a secondary alcohol + NAD(+) = a ketone + NADH + H(+). In Rattus norvegicus (Rat), this protein is Alcohol dehydrogenase 1 (Adh1).